We begin with the raw amino-acid sequence, 590 residues long: Glutamine--tRNA ligase (590 aa).

The 'HIGH' region motif lies at 55-65; that stretch reads PEPNGYLHIGH. ATP-binding positions include 56 to 58 and 62 to 68; these read EPN and HIGHAKS. Residues Asp-93 and Tyr-238 each coordinate L-glutamine. ATP contacts are provided by residues Thr-257 and 292-293; that span reads RL. A 'KMSKS' region motif is present at residues 299 to 303; that stretch reads ITSKR.

This sequence belongs to the class-I aminoacyl-tRNA synthetase family. Monomer.

It is found in the cytoplasm. The catalysed reaction is tRNA(Gln) + L-glutamine + ATP = L-glutaminyl-tRNA(Gln) + AMP + diphosphate. The sequence is that of Glutamine--tRNA ligase from Polynucleobacter asymbioticus (strain DSM 18221 / CIP 109841 / QLW-P1DMWA-1) (Polynucleobacter necessarius subsp. asymbioticus).